The chain runs to 356 residues: Malate dehydrogenase, glyoxysomal (356 aa).

Residues 1-36 constitute a glyoxysome transit peptide; sequence MQPIPDVNQRIARISAHLHPPKSQMEESSALRRANC. NAD(+) contacts are provided by residues 51-57 and Asp77; that span reads GAAGGIG. Arg124 and Arg130 together coordinate substrate. NAD(+)-binding positions include Asn137 and 160–162; that span reads ISN. Asn162 and Arg196 together coordinate substrate. The active-site Proton acceptor is His220. Met271 provides a ligand contact to NAD(+).

Belongs to the LDH/MDH superfamily. MDH type 1 family. In terms of assembly, homodimer.

It localises to the glyoxysome. It carries out the reaction (S)-malate + NAD(+) = oxaloacetate + NADH + H(+). The chain is Malate dehydrogenase, glyoxysomal from Citrullus lanatus (Watermelon).